The primary structure comprises 209 residues: Claudin-like protein ZF-A9 (209 aa).

4 consecutive transmembrane segments (helical) span residues 8–28 (LGTT…AIPL), 81–101 (AILV…FAGG), 114–134 (ALVA…GLVP), and 159–179 (FGAA…GGGL). Residues 187 to 209 (GRTSSRGRYTPASQNGRERSEYV) are disordered. A compositionally biased stretch (polar residues) spans 188-201 (RTSSRGRYTPASQN).

This sequence belongs to the claudin family.

It localises to the cell membrane. It is found in the cell junction. The protein localises to the tight junction. Its function is as follows. Component of tight junction (TJ) strands. This chain is Claudin-like protein ZF-A9 (cldng), found in Danio rerio (Zebrafish).